Consider the following 252-residue polypeptide: Phosphate import ATP-binding protein PstB (252 aa).

The ABC transporter domain occupies 6–247; the sequence is ITINNLNFYY…PRDKRTEDYI (242 aa). 38-45 contributes to the ATP binding site; the sequence is GPSGCGKS.

It belongs to the ABC transporter superfamily. Phosphate importer (TC 3.A.1.7) family. As to quaternary structure, the complex is composed of two ATP-binding proteins (PstB), two transmembrane proteins (PstC and PstA) and a solute-binding protein (PstS).

It is found in the cell membrane. It catalyses the reaction phosphate(out) + ATP + H2O = ADP + 2 phosphate(in) + H(+). In terms of biological role, part of the ABC transporter complex PstSACB involved in phosphate import. Responsible for energy coupling to the transport system. This Moorella thermoacetica (strain ATCC 39073 / JCM 9320) protein is Phosphate import ATP-binding protein PstB.